The chain runs to 23 residues: Coenzyme PQQ synthesis protein A (23 aa).

The pyrroloquinoline quinone (Glu-Tyr) cross-link spans Glu15–Tyr19.

Belongs to the PqqA family.

The protein operates within cofactor biosynthesis; pyrroloquinoline quinone biosynthesis. Functionally, required for coenzyme pyrroloquinoline quinone (PQQ) biosynthesis. PQQ is probably formed by cross-linking a specific glutamate to a specific tyrosine residue and excising these residues from the peptide. This chain is Coenzyme PQQ synthesis protein A, found in Pseudomonas putida (strain W619).